The primary structure comprises 222 residues: MKDLPAAMRPREKLLALGPAALADAELLALLLRTGLKGTGVLQLAGQLLAQFGGIGGLLQADPAGLKTVKGLGPAKRSELQAVLELARRAIVSQLAQRPVFDSPQAVRDYLRLQLGRLDHEVFAVLFLDAQHRLIAYEPLFRGTLTQTSVYPREVLKRALALNAAALILAHNHPSGVAEPSRADEFLTQSLKTALALIDVRVLDHFVVGRESVVSFAERGLL.

The MPN domain maps to 100–222 (VFDSPQAVRD…VVSFAERGLL (123 aa)). Zn(2+) contacts are provided by histidine 171, histidine 173, and aspartate 184. The short motif at 171 to 184 (HNHPSGVAEPSRAD) is the JAMM motif element.

The protein belongs to the UPF0758 family.

The polypeptide is UPF0758 protein Lcho_0695 (Leptothrix cholodnii (strain ATCC 51168 / LMG 8142 / SP-6) (Leptothrix discophora (strain SP-6))).